Reading from the N-terminus, the 322-residue chain is Pantothenate kinase (322 aa).

Position 104–111 (104–111 (GSVAVGKS)) interacts with ATP.

Belongs to the prokaryotic pantothenate kinase family.

It is found in the cytoplasm. It carries out the reaction (R)-pantothenate + ATP = (R)-4'-phosphopantothenate + ADP + H(+). Its pathway is cofactor biosynthesis; coenzyme A biosynthesis; CoA from (R)-pantothenate: step 1/5. The sequence is that of Pantothenate kinase from Leifsonia xyli subsp. xyli (strain CTCB07).